A 1024-amino-acid polypeptide reads, in one-letter code: MSTIVFGSFTCHLDAAIHQDNADRLAKAWTRPENRQVSNVHLLCRRAAKSLINTYESATASAWKGLEEKLQPMFAKREFSKTVTKRKGLRCFKESSEKFIEKKLRKQYQEERERFQFVNGPDAIVNQISVDKCEASVWVPFPHIIEKPSFATPSMKKKVVFTKVRMSEASLQLFMRRVAANAKANGQKVEIIGRKRVVGNYTTKSRLTYFRTHVRHLDGSKPRYDLVLDEATKKILQLFANTSRFHHVHKKGEVTPGMSGFVVNPINLSDPMQVYDTDLFIVRGKHNSILVDSRCKVSKKQSNEIIHYSDPGKQFSDGFTNSFMQCKLRETDHQSTSDLDVKECGDVAALVCQAIIPCGKITCLQCAQKYSYMSQQEIRDRFSTVIEQHEKTAMDNYPQFSHVLAFLKRYRELMRVENQNYEAFKDITHMIGEDRKEAPFSHLQQINELIIKGGMMSAQDYIEASDHLRELARYQKNRTENIRSGSIKAFRNKISSKAHVNMQLMCDNQLDTNGNFVWGQREYHAKRFFRNYFDVIDVSEGYRRHIVRENPRGIRKLAIGNLVISTNLAALRKQLLGEECIHFEVSKECTSRRGENFVYQCCCVTHEDGTPLESEIISPTKNHLVVGNTGDSKYVDLPTAKGGAMFIAKAGYCYINIFLAMLININEDEAKSFTKTVRDTLVPKLGTWPSMMDLATACHFLAVLYPETRNAELPRILVDHEAKIFHVVDSFGSLSTGMHVLKANTINQLISFASDTLDSNMKTYLVGGSEVDKCDEFKNVKLLIRSIYKPQIMEQVLKEEPYLLLMSVLSPGVLMALFNSGSLEKATQYWITRSHTLAAITSMLSALAAKVSLASTLNAQMSVIDEHAAVLCDSVFDGTKPYASYMMAVKTLERMKARTESDHTLNDLGFSVLRQATPHLVEKKLSPGIGASLERVKLVGKILCNLGIAAVAKTYTKTFHPKRRRRFRRQVRHLRSVITWQPVQTPERRSPTEKRRCGLLYTPVDGEAILQSHRNFHKFSSKHS.

The region spanning 165–308 (RMSEASLQLF…KKQSNEIIHY (144 aa)) is the Peptidase S30 domain. Active-site for P1 proteinase activity residues include His-216, Asp-225, and Ser-259. The Involved in interaction with stylet and aphid transmission motif lies at 360 to 363 (KITC). The short motif at 619-621 (PTK) is the Involved in virions binding and aphid transmission element. Positions 645-767 (MFIAKAGYCY…DSNMKTYLVG (123 aa)) constitute a Peptidase C6 domain. Catalysis depends on for helper component proteinase activity residues Cys-653 and His-726.

Belongs to the potyviridae P3N-PIPO polyprotein family. As to quaternary structure, interacts (via PIPO domain) with host PCaP1 protein; this interaction may help to anchor the movement complex to the plasma membrane from which the complex could move to the plasmodesmata. Post-translationally, potyviral RNA is expressed as two polyproteins which undergo post-translational proteolytic processing. Genome polyprotein is processed by NIa-pro, P1 and HC-pro proteinases resulting in the production of at least ten individual proteins. P3N-PIPO is cleaved by P1 and HC-pro proteinases resulting in the production of three individual proteins. The P1 proteinase and the HC-pro cleave only their respective C-termini autocatalytically.

It localises to the host cell junction. Its subcellular location is the host plasmodesma. It carries out the reaction Hydrolyzes a Gly-|-Gly bond at its own C-terminus, commonly in the sequence -Tyr-Xaa-Val-Gly-|-Gly, in the processing of the potyviral polyprotein.. In terms of biological role, required for aphid transmission and also has proteolytic activity. Only cleaves a Gly-Gly dipeptide at its own C-terminus. Interacts with virions and aphid stylets. Acts as a suppressor of RNA-mediated gene silencing, also known as post-transcriptional gene silencing (PTGS), a mechanism of plant viral defense that limits the accumulation of viral RNAs. May have RNA-binding activity. Functionally, allows efficient cell to cell propagation, by bypassing the host cell wall barrier. Transports viral genome to neighboring plant cells directly through plasmosdesmata, without any budding. This is P3N-PIPO polyprotein from Plum pox potyvirus (strain D) (PPV).